A 363-amino-acid chain; its full sequence is Aminomethyltransferase (363 aa).

This sequence belongs to the GcvT family. The glycine cleavage system is composed of four proteins: P, T, L and H.

It catalyses the reaction N(6)-[(R)-S(8)-aminomethyldihydrolipoyl]-L-lysyl-[protein] + (6S)-5,6,7,8-tetrahydrofolate = N(6)-[(R)-dihydrolipoyl]-L-lysyl-[protein] + (6R)-5,10-methylene-5,6,7,8-tetrahydrofolate + NH4(+). The glycine cleavage system catalyzes the degradation of glycine. The sequence is that of Aminomethyltransferase from Staphylococcus saprophyticus subsp. saprophyticus (strain ATCC 15305 / DSM 20229 / NCIMB 8711 / NCTC 7292 / S-41).